We begin with the raw amino-acid sequence, 47 residues long: Small, acid-soluble spore protein N (47 aa).

The segment covering 1 to 12 (MSNPKGSRKHFV) has biased composition (basic residues). The interval 1–47 (MSNPKGSRKHFVPNHIGTQPRAAGGNKGKQMQDQSGQHAQVIQTKGE) is disordered. The span at 29 to 47 (KQMQDQSGQHAQVIQTKGE) shows a compositional bias: polar residues.

The protein belongs to the SspN family.

It localises to the spore core. This is Small, acid-soluble spore protein N from Geobacillus kaustophilus (strain HTA426).